Here is a 20-residue protein sequence, read N- to C-terminus: Disintegrin (20 aa).

The region spanning 1-20 (EAGEECDCGTPENPCCDAAT) is the Disintegrin domain. Cystine bridges form between Cys-6-Cys-15 and Cys-8-Cys-16.

It belongs to the venom metalloproteinase (M12B) family. P-II subfamily. P-IIa sub-subfamily. As to quaternary structure, monomer. As to expression, expressed by the venom gland.

It localises to the secreted. In terms of biological role, inhibits fibrinogen interaction with platelets. Acts by binding to alpha-IIb/beta-3 (ITGA2B/ITGB3) on the platelet surface and inhibits aggregation induced by ADP, thrombin, platelet-activating factor and collagen. In Bothrops fonsecai (Fonseca's lancehead), this protein is Disintegrin.